We begin with the raw amino-acid sequence, 204 residues long: Salt stress root protein RS1 (204 aa).

Positions 128–204 are disordered; the sequence is FVPKEEPKPE…AAPAAEPEKQ (77 aa). The segment covering 147–161 has biased composition (basic and acidic residues); sequence TSREVAVEEEKKEEE. A compositionally biased stretch (low complexity) spans 164–180; the sequence is PAEPAAAAAEAAAPSTE. The segment covering 182–192 has biased composition (basic and acidic residues); the sequence is VEEKKEEEKPA. Residues 193–204 are compositionally biased toward low complexity; sequence EAAAPAAEPEKQ.

Belongs to the DREPP family.

The protein is Salt stress root protein RS1 of Oryza sativa subsp. indica (Rice).